Reading from the N-terminus, the 354-residue chain is Glutamine synthetase (354 aa).

A GS beta-grasp domain is found at 22–101; that stretch reads FHAEYVWIDG…VLSETYNNDG (80 aa). The GS catalytic domain occupies 108 to 354; sequence HRHHTAKVME…IIIETTILDK (247 aa).

This sequence belongs to the glutamine synthetase family. Homooctamer.

Its subcellular location is the cytoplasm. The catalysed reaction is L-glutamate + NH4(+) + ATP = L-glutamine + ADP + phosphate + H(+). The protein is Glutamine synthetase (GLN1) of Amanita muscaria (Fly agaric).